The following is a 430-amino-acid chain: Zinc finger and SCAN domain-containing protein 4 (430 aa).

Residues 1–38 (MASDLRISFQGEPSRNDPGSENLEHKPSQGPAVQEEEE) form a disordered region. Residues 44–126 (RTQLSLLQNS…KFMEDLTDES (83 aa)) form the SCAN box domain. Residues 164 to 185 (GSPTGTDMETPSWTPQDTSLET) are compositionally biased toward polar residues. Disordered stretches follow at residues 164–196 (GSPT…KENG), 224–257 (YPRP…SLKG), and 281–300 (EPVP…GHQE). 4 consecutive C2H2-type zinc fingers follow at residues 309 to 331 (YRCE…QRRH), 337 to 359 (FTCA…QKIH), 365 to 387 (FTCS…ERIH), and 393 to 415 (YECS…LRNH).

It localises to the nucleus. Its subcellular location is the chromosome. It is found in the telomere. Its function is as follows. Embryonic stem (ES) cell-specific transcription factor required to regulate ES cell pluripotency. Binds telomeres and plays a key role in genomic stability in ES cells by regulating telomere elongation. Acts as an activator of spontaneous telomere sister chromatid exchange (T-SCE) and telomere elongation in undifferentiated ES cells. The sequence is that of Zinc finger and SCAN domain-containing protein 4 (ZSCAN4) from Ailuropoda melanoleuca (Giant panda).